The primary structure comprises 214 residues: Putative ankyrin repeat protein RF_1081 (214 aa).

Residues 1 to 14 (MRKQQIPTLSTSAL) are compositionally biased toward polar residues. A disordered region spans residues 1 to 32 (MRKQQIPTLSTSALDKSPGPGSPDSDIEMKST). Residues 67–135 (NPNALLHEAA…EEPILVTKKD (69 aa)) form an ANK repeat.

In Rickettsia felis (strain ATCC VR-1525 / URRWXCal2) (Rickettsia azadi), this protein is Putative ankyrin repeat protein RF_1081.